The primary structure comprises 307 residues: MPYCLYDNTCKVQQTMLDDLSIIIVNYKSEEDIKNLYSRISGVAEFVVVDNSSSSELRQWCSHDDIHYIDSGGNHGYSGGNNMGIRYSLDELNRESVLVLNPDLEINKEDIRELYTIHQSTNYSIISPRILNREGIPVNESPTPEGTLFRSIGLLPALPGKEHNLKPVDHAHGSCMMISESVFEQIGYLNESFFMYYEEIEFCYRARRENINIGQCQVVDAIHNQPVDQTRFESSYQVYLDFRNRFLASNSIFSKSIDRIQYTTLSILISGWMVVRMLFEKKIEYIAPAIFGALHGIQNRTGKPERM.

Belongs to the glycosyltransferase 2 family.

The protein operates within protein modification; protein glycosylation. Its pathway is cell surface structure biogenesis; S-layer biogenesis. Its function is as follows. Hexosyltransferase involved in N-glycan biosynthetic pathway that takes place under low-salt conditions (1.75 M instead of 3.4 M). Participates in the formation of the tetrasaccharide present at 'Asn-532' of S-layer glycoprotein Csg, consisting of a sulfated hexose, 2 hexoses and rhamnose. Involved in the addition of final rhamnose (sugar 4) of the tetrasaccharide on the dolichol phosphate carrier. The polypeptide is Low-salt glycan biosynthesis hexosyltransferase Agl10 (agl10) (Haloferax volcanii (strain ATCC 29605 / DSM 3757 / JCM 8879 / NBRC 14742 / NCIMB 2012 / VKM B-1768 / DS2) (Halobacterium volcanii)).